Here is a 719-residue protein sequence, read N- to C-terminus: Polyribonucleotide nucleotidyltransferase (719 aa).

2 residues coordinate Mg(2+): Asp-491 and Asp-497. Positions 558–617 (PRMLTIKINPEKIRDVIGKGGATIRALTEETGTQIDISDDGTIVIASVDETQAKEAQRRI) constitute a KH domain. An S1 motif domain is found at 627–695 (GQIYDGSVLR…DKGRLRLSIK (69 aa)).

Belongs to the polyribonucleotide nucleotidyltransferase family. Requires Mg(2+) as cofactor.

It localises to the cytoplasm. It carries out the reaction RNA(n+1) + phosphate = RNA(n) + a ribonucleoside 5'-diphosphate. Involved in mRNA degradation. Catalyzes the phosphorolysis of single-stranded polyribonucleotides processively in the 3'- to 5'-direction. The chain is Polyribonucleotide nucleotidyltransferase from Bordetella parapertussis (strain 12822 / ATCC BAA-587 / NCTC 13253).